A 550-amino-acid polypeptide reads, in one-letter code: Amino acid transporter AVT1D (550 aa).

Positions 1 to 16 (MKLDEEFLHDRDHSFL) are enriched in basic and acidic residues. A disordered region spans residues 1-99 (MKLDEEFLHD…FMPQSSSRRL (99 aa)). A compositionally biased stretch (polar residues) spans 84 to 99 (TPPSVSFMPQSSSRRL). 11 consecutive transmembrane segments (helical) span residues 164 to 184 (SVLN…PYAI), 189 to 209 (WLGL…GVLM), 236 to 256 (FIIS…YIIM), 264 to 286 (LFPN…IFAI), 308 to 328 (SVGG…VGAV), 345 to 365 (LPVT…FPNI), 375 to 395 (FPLV…AVAV), 424 to 444 (VWTA…PIVM), 459 to 479 (GVSI…ALSV), 481 to 501 (FFAI…ALIF), and 521 to 541 (LCIF…YSAI).

Belongs to the amino acid/polyamine transporter 2 family. Amino acid/auxin permease (AAAP) (TC 2.A.18.5) subfamily.

The protein resides in the membrane. The chain is Amino acid transporter AVT1D from Arabidopsis thaliana (Mouse-ear cress).